A 144-amino-acid chain; its full sequence is L-fucose mutarotase (144 aa).

H22 acts as the Proton donor in catalysis. Residues D30, R109, and 131-133 (YGN) each bind substrate.

The protein belongs to the RbsD / FucU family. FucU mutarotase subfamily. In terms of assembly, homodecamer.

Its subcellular location is the cytoplasm. The catalysed reaction is alpha-L-fucose = beta-L-fucose. Its pathway is carbohydrate metabolism; L-fucose metabolism. Its function is as follows. Involved in the anomeric conversion of L-fucose. The chain is L-fucose mutarotase from Histophilus somni (strain 129Pt) (Haemophilus somnus).